A 264-amino-acid polypeptide reads, in one-letter code: Endonuclease V (264 aa).

2 residues coordinate Mg(2+): aspartate 72 and aspartate 137.

Belongs to the endonuclease V family. The cofactor is Mg(2+).

Its subcellular location is the cytoplasm. The catalysed reaction is Endonucleolytic cleavage at apurinic or apyrimidinic sites to products with a 5'-phosphate.. Its function is as follows. DNA repair enzyme involved in the repair of deaminated bases. Selectively cleaves double-stranded DNA at the second phosphodiester bond 3' to a deoxyinosine leaving behind the intact lesion on the nicked DNA. The protein is Endonuclease V of Halobacterium salinarum (strain ATCC 700922 / JCM 11081 / NRC-1) (Halobacterium halobium).